We begin with the raw amino-acid sequence, 80 residues long: UPF0512 protein Q (80 aa).

This sequence belongs to the UPF0512 family.

The protein is UPF0512 protein Q of Dictyostelium discoideum (Social amoeba).